A 353-amino-acid polypeptide reads, in one-letter code: Photosystem II D2 protein (353 aa).

The residue at position 2 (threonine 2) is an N-acetylthreonine. Threonine 2 carries the post-translational modification Phosphothreonine. The helical transmembrane segment at 41-61 (CAYFALGGWFTGTTFVTSWYT) threads the bilayer. Chlorophyll a is bound at residue histidine 118. The chain crosses the membrane as a helical span at residues 125-141 (GFMLRQFELARSVQLRP). Glutamine 130 and asparagine 143 together coordinate pheophytin a. Residues 153–166 (VFVSVFLIYPLGQS) form a helical membrane-spanning segment. Residue histidine 198 coordinates chlorophyll a. The helical transmembrane segment at 208–228 (AALLCAIHGATVENTLFEDGD) threads the bilayer. A plastoquinone contacts are provided by histidine 215 and phenylalanine 262. Histidine 215 contacts Fe cation. Histidine 269 lines the Fe cation pocket. The helical transmembrane segment at 279–295 (GLWMSALGVVGLALNLR) threads the bilayer.

The protein belongs to the reaction center PufL/M/PsbA/D family. In terms of assembly, PSII is composed of 1 copy each of membrane proteins PsbA, PsbB, PsbC, PsbD, PsbE, PsbF, PsbH, PsbI, PsbJ, PsbK, PsbL, PsbM, PsbT, PsbX, PsbY, PsbZ, Psb30/Ycf12, at least 3 peripheral proteins of the oxygen-evolving complex and a large number of cofactors. It forms dimeric complexes. It depends on The D1/D2 heterodimer binds P680, chlorophylls that are the primary electron donor of PSII, and subsequent electron acceptors. It shares a non-heme iron and each subunit binds pheophytin, quinone, additional chlorophylls, carotenoids and lipids. There is also a Cl(-1) ion associated with D1 and D2, which is required for oxygen evolution. The PSII complex binds additional chlorophylls, carotenoids and specific lipids. as a cofactor.

The protein resides in the plastid. It is found in the chloroplast thylakoid membrane. The enzyme catalyses 2 a plastoquinone + 4 hnu + 2 H2O = 2 a plastoquinol + O2. In terms of biological role, photosystem II (PSII) is a light-driven water:plastoquinone oxidoreductase that uses light energy to abstract electrons from H(2)O, generating O(2) and a proton gradient subsequently used for ATP formation. It consists of a core antenna complex that captures photons, and an electron transfer chain that converts photonic excitation into a charge separation. The D1/D2 (PsbA/PsbD) reaction center heterodimer binds P680, the primary electron donor of PSII as well as several subsequent electron acceptors. D2 is needed for assembly of a stable PSII complex. This chain is Photosystem II D2 protein, found in Glycine max (Soybean).